Consider the following 191-residue polypeptide: uncharacterized protein (191 aa).

Helical transmembrane passes span 12–32 (FAFL…FFTL), 48–68 (LVAL…LTLF), 92–112 (YISV…LLSL), and 168–188 (IFCL…SCAF).

Its subcellular location is the membrane. This is an uncharacterized protein from Saccharomyces cerevisiae (strain ATCC 204508 / S288c) (Baker's yeast).